The primary structure comprises 397 residues: Mannonate dehydratase 2 (397 aa).

This sequence belongs to the mannonate dehydratase family. The cofactor is Fe(2+). Mn(2+) is required as a cofactor.

It carries out the reaction D-mannonate = 2-dehydro-3-deoxy-D-gluconate + H2O. The protein operates within carbohydrate metabolism; pentose and glucuronate interconversion. In terms of biological role, catalyzes the dehydration of D-mannonate. The polypeptide is Mannonate dehydratase 2 (uxuA2) (Agrobacterium fabrum (strain C58 / ATCC 33970) (Agrobacterium tumefaciens (strain C58))).